The sequence spans 242 residues: ATP-dependent dethiobiotin synthetase BioD (242 aa).

12–17 provides a ligand contact to ATP; sequence EVGKTV. Residue Thr16 coordinates Mg(2+). Residue Lys37 is part of the active site. Position 41 (Ser41) interacts with substrate. Residues Asp51 and 112-115 each bind ATP; that span reads EGAG. Mg(2+) contacts are provided by Asp51 and Glu112.

It belongs to the dethiobiotin synthetase family. Homodimer. The cofactor is Mg(2+).

It localises to the cytoplasm. The enzyme catalyses (7R,8S)-7,8-diammoniononanoate + CO2 + ATP = (4R,5S)-dethiobiotin + ADP + phosphate + 3 H(+). It participates in cofactor biosynthesis; biotin biosynthesis; biotin from 7,8-diaminononanoate: step 1/2. In terms of biological role, catalyzes a mechanistically unusual reaction, the ATP-dependent insertion of CO2 between the N7 and N8 nitrogen atoms of 7,8-diaminopelargonic acid (DAPA, also called 7,8-diammoniononanoate) to form a ureido ring. This chain is ATP-dependent dethiobiotin synthetase BioD, found in Bacillus cereus (strain G9842).